The primary structure comprises 300 residues: F-box protein PP2-A15 (300 aa).

Residues 17–63 enclose the F-box domain; that stretch reads MGPGLGDIPESCVACVFMYLTPPEICNLAGLNRSFRGAASSDSVWEK.

This Arabidopsis thaliana (Mouse-ear cress) protein is F-box protein PP2-A15 (PP2A15).